Here is a 138-residue protein sequence, read N- to C-terminus: Large ribosomal subunit protein uL16 (138 aa).

The segment covering methionine 1–glutamine 13 has biased composition (basic residues). The tract at residues methionine 1 to glycine 24 is disordered.

It belongs to the universal ribosomal protein uL16 family. Part of the 50S ribosomal subunit.

In terms of biological role, binds 23S rRNA and is also seen to make contacts with the A and possibly P site tRNAs. This Burkholderia ambifaria (strain ATCC BAA-244 / DSM 16087 / CCUG 44356 / LMG 19182 / AMMD) (Burkholderia cepacia (strain AMMD)) protein is Large ribosomal subunit protein uL16.